Reading from the N-terminus, the 133-residue chain is Ribosome-binding factor A (133 aa).

This sequence belongs to the RbfA family. Monomer. Binds 30S ribosomal subunits, but not 50S ribosomal subunits or 70S ribosomes.

Its subcellular location is the cytoplasm. In terms of biological role, one of several proteins that assist in the late maturation steps of the functional core of the 30S ribosomal subunit. Associates with free 30S ribosomal subunits (but not with 30S subunits that are part of 70S ribosomes or polysomes). Required for efficient processing of 16S rRNA. May interact with the 5'-terminal helix region of 16S rRNA. This chain is Ribosome-binding factor A, found in Bordetella pertussis (strain Tohama I / ATCC BAA-589 / NCTC 13251).